Reading from the N-terminus, the 503-residue chain is uncharacterized protein (503 aa).

Composition is skewed to basic and acidic residues over residues 1 to 23 (MAHE…EKVR) and 203 to 215 (PLEK…RSDQ). Disordered stretches follow at residues 1–29 (MAHE…TVPV) and 149–227 (ETFQ…SNSS). Phosphoserine is present on residues S239 and S243. Disordered regions lie at residues 346–370 (LDPA…GAKW) and 450–475 (LLSS…GAPK). Basic and acidic residues predominate over residues 347–356 (DPARLPRPDM).

This is an uncharacterized protein from Bos taurus (Bovine).